We begin with the raw amino-acid sequence, 225 residues long: Germin-like protein 8-3 (225 aa).

The N-terminal stretch at 1–23 (MASSSLFLLASLLVLASWQQAIA) is a signal peptide. Cysteines 33 and 48 form a disulfide. N-linked (GlcNAc...) asparagine glycosylation is found at asparagine 53 and asparagine 78. The Cupin type-1 domain maps to 60 to 213 (FNAAKFDMPR…AFQVEKKVID (154 aa)). Histidine 111, histidine 113, glutamate 118, and histidine 158 together coordinate Mn(2+).

Belongs to the germin family. In terms of assembly, oligomer (believed to be a pentamer but probably hexamer).

Its subcellular location is the secreted. It localises to the extracellular space. It is found in the apoplast. Plays a role in broad-spectrum disease resistance. Probably has no oxalate oxidase activity even if the active site is conserved. The chain is Germin-like protein 8-3 (GER2) from Oryza sativa subsp. japonica (Rice).